We begin with the raw amino-acid sequence, 897 residues long: Interleukin enhancer-binding factor 3-A (897 aa).

A DZF domain is found at 5-379; that stretch reads RIFLNDDRHV…PLKRPIEEDG (375 aa). Disordered regions lie at residues 52-85, 364-403, and 466-502; these read QEKDCSGEQEQPMAEETETTEEGKDSEMKTGENP, TTYAMPPLKRPIEEDGDDKSPSKKKKKIQKKDEKSEPPQV, and MGLPTGMEEKEEGTDESEQKPVVQTPAQPDDSAEVDS. 2 stretches are compositionally biased toward basic and acidic residues: residues 72 to 81 and 373 to 384; these read EEGKDSEMKT and RPIEEDGDDKSP. Residues 372-390 carry the Bipartite nuclear localization signal motif; it reads KRPIEEDGDDKSPSKKKKK. DRBM domains are found at residues 399–468 and 521–587; these read EPPQ…DMGL and HGKN…KLFP. 2 disordered regions span residues 627–650 and 708–797; these read PPPQAMRGRGRGGMNRGRGRGRGG and GDSY…AQGA. Residues 637 to 650 are compositionally biased toward gly residues; sequence RGGMNRGRGRGRGG. A compositionally biased stretch (pro residues) spans 714-747; it reads PTPPKPFVNKKPPPPQQQQQQQPPPQHASNPPKP. Positions 749-794 are enriched in low complexity; sequence YNQGYQGHQGGQQQQQQQQQQQTYNQNQYSNYGPPQKQKGGYNQGA.

A component of a ybx2/frgy2-containing mRNA-ribonucleoprotein (mRNP) complex. Also a component of the CCAAT box transcription factor (CBTF) complex. Phosphorylated. Phosphorylation affects nuclear translocation. In terms of processing, methylated by protein arginine N-methyltransferase 1 (prmt1b) in the RGG-rich domain. Methylation decreases DNA-binding and thereby decreases transcription of the gata2 gene, but does not regulate dsRNA binding or subcellular localization. As to expression, expressed mainly in the ectoderm (at protein level).

The protein resides in the nucleus. It localises to the cytoplasm. In terms of biological role, RNA-binding protein that plays an essential role in the biogenesis of circular RNAs (circRNAs) which are produced by back-splicing circularization of pre-mRNAs. Within the nucleus, promotes circRNAs processing by stabilizing the regulatory elements residing in the flanking introns of the circularized exons. Plays thereby a role in the back-splicing of a subset of circRNAs. As a consequence, participates in a wide range of transcriptional and post-transcriptional processes. Binds to poly-U elements and AU-rich elements (AREs) in the 3'-UTR of target mRNAs. Upon viral infection, ILF3 accumulates in the cytoplasm and participates in the innate antiviral response. Mechanistically, ILF3 becomes phosphorylated and activated by the double-stranded RNA-activated protein kinase/PKR which releases ILF3 from cellular mature circRNAs. In turn, unbound ILF3 molecules are able to interact with and thus inhibit viral mRNAs. Has a cytoplasmic role early in development as part of a ribonucleoprotein (mRNP) complex which may regulate mRNA transport and/or translation. Following nuclear localization at the mid-blastula transition, acts as a transcription factor and binds the 5'-CCAAT-3' promoter sequence to regulate transcription of the gata2 gene as a subunit of the CCAAT box transcription factor (CBTF). Its role as an mRNP component negatively regulates its activity as a transcription factor by precluding its nuclear localization. The polypeptide is Interleukin enhancer-binding factor 3-A (ilf3-a) (Xenopus laevis (African clawed frog)).